The chain runs to 187 residues: Alkyl hydroperoxide reductase C (187 aa).

The Thioredoxin domain maps to 2 to 157 (SLINTQVQPF…TVRKLKAAQY (156 aa)). The Cysteine sulfenic acid (-SOH) intermediate role is filled by Cys-47.

It belongs to the peroxiredoxin family. AhpC/Prx1 subfamily. Homodimer; disulfide-linked, upon oxidation. 5 homodimers assemble to form a ring-like decamer.

The protein localises to the cytoplasm. It is found in the secreted. It carries out the reaction a hydroperoxide + NADH + H(+) = an alcohol + NAD(+) + H2O. Thiol-specific peroxidase that catalyzes the reduction of hydrogen peroxide and organic hydroperoxides to water and alcohols, respectively. Plays a role in cell protection against oxidative stress by detoxifying peroxides. The chain is Alkyl hydroperoxide reductase C (ahpC) from Pseudomonas aeruginosa (strain UCBPP-PA14).